The following is a 547-amino-acid chain: ATP synthase subunit alpha (547 aa).

An ATP-binding site is contributed by 173-180; sequence GDRATGKT. The interval 526–547 is disordered; it reads PEAEALADEDVEQEQIVRQKRG. Acidic residues predominate over residues 528–538; the sequence is AEALADEDVEQ.

Belongs to the ATPase alpha/beta chains family. In terms of assembly, F-type ATPases have 2 components, CF(1) - the catalytic core - and CF(0) - the membrane proton channel. CF(1) has five subunits: alpha(3), beta(3), gamma(1), delta(1), epsilon(1). CF(0) has three main subunits: a(1), b(2) and c(9-12). The alpha and beta chains form an alternating ring which encloses part of the gamma chain. CF(1) is attached to CF(0) by a central stalk formed by the gamma and epsilon chains, while a peripheral stalk is formed by the delta and b chains.

The protein localises to the cell membrane. It carries out the reaction ATP + H2O + 4 H(+)(in) = ADP + phosphate + 5 H(+)(out). Functionally, produces ATP from ADP in the presence of a proton gradient across the membrane. The alpha chain is a regulatory subunit. The chain is ATP synthase subunit alpha from Nocardioides sp. (strain ATCC BAA-499 / JS614).